The chain runs to 92 residues: Small ribosomal subunit protein uS19c (92 aa).

Belongs to the universal ribosomal protein uS19 family.

Its subcellular location is the plastid. It is found in the chloroplast. Its function is as follows. Protein S19 forms a complex with S13 that binds strongly to the 16S ribosomal RNA. In Rhodomonas salina (Cryptomonas salina), this protein is Small ribosomal subunit protein uS19c.